A 500-amino-acid polypeptide reads, in one-letter code: Glutamate--tRNA ligase (500 aa).

A 'HIGH' region motif is present at residues 12–22 (PSPTGHLHIGN). Positions 259–263 (KLSKR) match the 'KMSKS' region motif. Position 262 (K262) interacts with ATP.

This sequence belongs to the class-I aminoacyl-tRNA synthetase family. Glutamate--tRNA ligase type 1 subfamily. In terms of assembly, monomer.

Its subcellular location is the cytoplasm. It catalyses the reaction tRNA(Glu) + L-glutamate + ATP = L-glutamyl-tRNA(Glu) + AMP + diphosphate. In terms of biological role, catalyzes the attachment of glutamate to tRNA(Glu) in a two-step reaction: glutamate is first activated by ATP to form Glu-AMP and then transferred to the acceptor end of tRNA(Glu). The polypeptide is Glutamate--tRNA ligase (Lactobacillus delbrueckii subsp. bulgaricus (strain ATCC BAA-365 / Lb-18)).